Consider the following 140-residue polypeptide: Large-conductance mechanosensitive channel (140 aa).

2 helical membrane passes run F11 to G31 and G82 to V102.

This sequence belongs to the MscL family. As to quaternary structure, homopentamer.

It localises to the cell inner membrane. Its function is as follows. Channel that opens in response to stretch forces in the membrane lipid bilayer. May participate in the regulation of osmotic pressure changes within the cell. This Parabacteroides distasonis (strain ATCC 8503 / DSM 20701 / CIP 104284 / JCM 5825 / NCTC 11152) protein is Large-conductance mechanosensitive channel.